A 160-amino-acid polypeptide reads, in one-letter code: Eosinophil cationic protein (160 aa).

Residues 1 to 27 (MVPKLFTSQICLLLLLGLMGVEGSLHA) form the signal peptide. A required for nearly all of the bactericidal activities; partially involved in LPS-binding region spans residues 28-72 (RPPQFTRAQWFAIQHISLNPPRCTIAMRVINNYRWRCKNQNTFLR). The Proton acceptor role is filled by histidine 42. 4 disulfide bridges follow: cysteine 50/cysteine 110, cysteine 64/cysteine 123, cysteine 82/cysteine 138, and cysteine 89/cysteine 98. Tyrosine 60 carries the post-translational modification 3'-nitrotyrosine. Position 65–69 (65–69 (KNQNT)) interacts with substrate. 3 N-linked (GlcNAc...) asparagine glycosylation sites follow: asparagine 84, asparagine 92, and asparagine 119. The Proton donor role is filled by histidine 155.

The protein belongs to the pancreatic ribonuclease family. As to quaternary structure, interacts with bacterial lipopolysaccharide (LPS) and lipoteichoic acid (LTA). In vitro interacts with phospholipid bilayers.

The protein resides in the secreted. Its function is as follows. Cytotoxin and helminthotoxin with low-efficiency ribonuclease activity. Possesses a wide variety of biological activities. Exhibits antibacterial activity. The polypeptide is Eosinophil cationic protein (RNASE3) (Gorilla gorilla gorilla (Western lowland gorilla)).